Consider the following 133-residue polypeptide: NADPH-dependent 7-cyano-7-deazaguanine reductase (133 aa).

Cys-46 functions as the Thioimide intermediate in the catalytic mechanism. Asp-53 acts as the Proton donor in catalysis. Substrate is bound by residues 68-70 (VEL) and 87-88 (HE).

It belongs to the GTP cyclohydrolase I family. QueF type 1 subfamily.

Its subcellular location is the cytoplasm. It catalyses the reaction 7-aminomethyl-7-carbaguanine + 2 NADP(+) = 7-cyano-7-deazaguanine + 2 NADPH + 3 H(+). It participates in tRNA modification; tRNA-queuosine biosynthesis. Catalyzes the NADPH-dependent reduction of 7-cyano-7-deazaguanine (preQ0) to 7-aminomethyl-7-deazaguanine (preQ1). The sequence is that of NADPH-dependent 7-cyano-7-deazaguanine reductase from Parasynechococcus marenigrum (strain WH8102).